The chain runs to 685 residues: Protein SPT2 homolog (685 aa).

The important for interaction with DNA stretch occupies residues 1-570; the sequence is MDFREILMIA…PPLSGYRAAQ (570 aa). A Glycyl lysine isopeptide (Lys-Gly) (interchain with G-Cter in SUMO2) cross-link involves residue Lys-37. Residues 45-81 adopt a coiled-coil conformation; sequence QAFLKRKEEELRRKALEEKRRKEELVKKRIELKHDKK. Positions 79–168 are disordered; that stretch reads DKKARAMAKR…PLKSAPPPMN (90 aa). Over residues 101-111 the composition is skewed to basic and acidic residues; the sequence is IEEKSKKRQAT. Residues 123–148 adopt a coiled-coil conformation; the sequence is YEMEEENEFLEYNHAESEQEYEEEQE. Lys-187 is covalently cross-linked (Glycyl lysine isopeptide (Lys-Gly) (interchain with G-Cter in SUMO2)). Composition is skewed to basic and acidic residues over residues 188–209 and 260–275; these read VVKK…EFLE and HAEK…EKHL. 2 disordered regions span residues 188–615 and 644–685; these read VVKK…QEEI and SWKE…LKRR. Ser-278 is subject to Phosphoserine. 3 stretches are compositionally biased toward low complexity: residues 317 to 330, 365 to 385, and 402 to 415; these read SSTS…TSAS, SPGV…PSTG, and GSSS…ISGS. A compositionally biased stretch (polar residues) spans 416–431; sequence KKPTNDSNPSRRTVSG. Positions 435–501 are enriched in low complexity; that stretch reads PGQPASSSGG…PGRSISGSIP (67 aa). A Phosphoserine modification is found at Ser-471. A compositionally biased stretch (polar residues) spans 519–529; it reads GPGQTVSSSGP. Residues 542-553 show a composition bias toward low complexity; that stretch reads ISSKNIISRSSN. The interval 571–685 is important for interaction with histones; the sequence is GPQRLPFPTG…RRRAKKLKRR (115 aa). The residue at position 582 (Lys-582) is an N6-acetyllysine. Acidic residues predominate over residues 587–613; the sequence is YEEEDDDDDEYDSEMEDFIEDEGEPQE. Ser-599 carries the post-translational modification Phosphoserine. Basic and acidic residues-rich tracts occupy residues 644-655 and 666-676; these read SWKEQQKEEAKS and EMRREEEEMQR. A coiled-coil region spans residues 645–685; it reads WKEQQKEEAKSLRLGMQEDLEEMRREEEEMQRRRAKKLKRR.

This sequence belongs to the SPT2 family. As to quaternary structure, interacts with histones. Interacts with a heterotetrameric complex formed by histone H3 and H4, especially when the histone tetramer is not bound to DNA. Interacts with histone H3.3.

The protein resides in the nucleus. It is found in the nucleolus. Its function is as follows. Histone chaperone that stabilizes pre-existing histone tetramers and regulates replication-independent histone exchange on chromatin. Required for normal chromatin refolding in the coding region of transcribed genes, and for the suppression of spurious transcription. Binds DNA and histones and promotes nucleosome assembly (in vitro). Facilitates formation of tetrameric histone complexes containing histone H3 and H4. Modulates RNA polymerase 1-mediated transcription. Binds DNA, with a preference for branched DNA species, such as Y-form DNA and Holliday junction DNA. The sequence is that of Protein SPT2 homolog (SPTY2D1) from Homo sapiens (Human).